Consider the following 103-residue polypeptide: Small ribosomal subunit protein uS10 (103 aa).

Belongs to the universal ribosomal protein uS10 family. Part of the 30S ribosomal subunit.

Its function is as follows. Involved in the binding of tRNA to the ribosomes. In Mycoplasmopsis pulmonis (strain UAB CTIP) (Mycoplasma pulmonis), this protein is Small ribosomal subunit protein uS10.